The following is a 738-amino-acid chain: Melanotransferrin (738 aa).

The signal sequence occupies residues 1–19; it reads MRGPSGALWLLLALRTVLG. The antigenic epitope stretch occupies residues 20–30; it reads GMEVRWCATSD. Transferrin-like domains lie at 23–357 and 366–706; these read VRWC…GLLC and LRWC…GMSS. Intrachain disulfides connect Cys-26–Cys-63 and Cys-36–Cys-54. N-linked (GlcNAc...) asparagine glycosylation is present at Asn-38. 2 residues coordinate Fe(3+): Asp-78 and Tyr-107. 4 disulfide bridges follow: Cys-130–Cys-216, Cys-172–Cys-189, Cys-186–Cys-199, and Cys-257–Cys-271. A hydrogencarbonate-binding site is contributed by Thr-132. N-linked (GlcNAc...) asparagine glycosylation is present at Asn-135. Hydrogencarbonate-binding residues include Arg-136, Val-138, and Gly-139. Tyr-210 is a binding site for Fe(3+). Residues His-279, Ser-421, and Tyr-451 each coordinate Fe(3+). Residue Ser-462 is modified to Phosphoserine; by FAM20C. N-linked (GlcNAc...) asparagine glycosylation occurs at Asn-515. Residues Tyr-556 and His-625 each coordinate Fe(3+). A lipid anchor (GPI-anchor amidated cysteine) is attached at Cys-709. Residues 710–738 constitute a propeptide, removed in mature form; the sequence is SGAAAPAPGAPLLPLLLPALAARLLPPAL.

This sequence belongs to the transferrin family. As to expression, found predominantly in human melanomas and in certain fetal tissues; also found in liver, epithelium, umbilical chord, placenta and sweat gland ducts.

Its subcellular location is the cell membrane. In terms of biological role, involved in iron cellular uptake. Seems to be internalized and then recycled back to the cell membrane. Binds a single atom of iron per subunit. Could also bind zinc. The protein is Melanotransferrin of Homo sapiens (Human).